A 167-amino-acid chain; its full sequence is Leptin (167 aa).

Positions 1–21 (MYWRTLWGFLWLWPYLFYIQA) are cleaved as a signal peptide. Residues C117 and C167 are joined by a disulfide bond.

The protein belongs to the leptin family.

Its subcellular location is the secreted. In terms of biological role, key player in the regulation of energy balance and body weight control. Once released into the circulation, has central and peripheral effects by binding LEPR, found in many tissues, which results in the activation of several major signaling pathways. In the hypothalamus, acts as an appetite-regulating factor that induces a decrease in food intake and an increase in energy consumption by inducing anorexinogenic factors and suppressing orexigenic neuropeptides, also regulates bone mass and secretion of hypothalamo-pituitary-adrenal hormones. In the periphery, increases basal metabolism, influences reproductive function, regulates pancreatic beta-cell function and insulin secretion, is pro-angiogenic for endothelial cell and affects innate and adaptive immunity. In the arcuate nucleus of the hypothalamus, activates by depolarization POMC neurons inducing FOS and SOCS3 expression to release anorexigenic peptides and inhibits by hyperpolarization NPY neurons inducing SOCS3 with a consequent reduction on release of orexigenic peptides. In addition to its known satiety inducing effect, has a modulatory role in nutrient absorption. In the intestine, reduces glucose absorption by enterocytes by activating PKC and leading to a sequential activation of p38, PI3K and ERK signaling pathways which exerts an inhibitory effect on glucose absorption. Acts as a growth factor on certain tissues, through the activation of different signaling pathways increases expression of genes involved in cell cycle regulation such as CCND1, via JAK2-STAT3 pathway, or VEGFA, via MAPK1/3 and PI3K-AKT1 pathways. May also play an apoptotic role via JAK2-STAT3 pathway and up-regulation of BIRC5 expression. Pro-angiogenic, has mitogenic activity on vascular endothelial cells and plays a role in matrix remodeling by regulating the expression of matrix metalloproteinases (MMPs) and tissue inhibitors of metalloproteinases (TIMPs). In innate immunity, modulates the activity and function of neutrophils by increasing chemotaxis and the secretion of oxygen radicals. Increases phagocytosis by macrophages and enhances secretion of pro-inflammatory mediators. Increases cytotoxic ability of NK cells. Plays a pro-inflammatory role, in synergy with IL1B, by inducing NOS2 which promotes the production of IL6, IL8 and Prostaglandin E2, through a signaling pathway that involves JAK2, PI3K, MAP2K1/MEK1 and MAPK14/p38. In adaptive immunity, promotes the switch of memory T-cells towards T helper-1 cell immune responses. Increases CD4(+)CD25(-) T-cell proliferation and reduces autophagy during TCR (T-cell receptor) stimulation, through MTOR signaling pathway activation and BCL2 up-regulation. The chain is Leptin (LEP) from Macaca mulatta (Rhesus macaque).